Consider the following 152-residue polypeptide: Superoxide dismutase [Cu-Zn] (152 aa).

Residues histidine 45, histidine 47, and histidine 62 each coordinate Cu cation. Residues cysteine 56 and cysteine 145 are joined by a disulfide bond. 4 residues coordinate Zn(2+): histidine 62, histidine 70, histidine 79, and aspartate 82. Histidine 119 provides a ligand contact to Cu cation.

The protein belongs to the Cu-Zn superoxide dismutase family. Homodimer. Cu cation serves as cofactor. Requires Zn(2+) as cofactor.

The protein localises to the cytoplasm. It catalyses the reaction 2 superoxide + 2 H(+) = H2O2 + O2. In terms of biological role, destroys radicals which are normally produced within the cells and which are toxic to biological systems. The chain is Superoxide dismutase [Cu-Zn] (SODCC) from Pisum sativum (Garden pea).